Reading from the N-terminus, the 353-residue chain is Uroporphyrinogen decarboxylase (353 aa).

Substrate contacts are provided by residues 26–30 (RQAGR), Asp75, Tyr161, Ser216, and His332.

This sequence belongs to the uroporphyrinogen decarboxylase family. As to quaternary structure, homodimer.

It localises to the cytoplasm. It catalyses the reaction uroporphyrinogen III + 4 H(+) = coproporphyrinogen III + 4 CO2. The protein operates within porphyrin-containing compound metabolism; protoporphyrin-IX biosynthesis; coproporphyrinogen-III from 5-aminolevulinate: step 4/4. Functionally, catalyzes the decarboxylation of four acetate groups of uroporphyrinogen-III to yield coproporphyrinogen-III. The sequence is that of Uroporphyrinogen decarboxylase from Gluconacetobacter diazotrophicus (strain ATCC 49037 / DSM 5601 / CCUG 37298 / CIP 103539 / LMG 7603 / PAl5).